We begin with the raw amino-acid sequence, 736 residues long: ABC transporter G family member 16 (736 aa).

The region spanning 88-332 (LDFHDLVPWR…FAGFGNPIPE (245 aa)) is the ABC transporter domain. 125-132 (GASGSGKS) is a binding site for ATP. 7 helical membrane-spanning segments follow: residues 410–430 (SVIN…PFWI), 449–469 (LLGM…TVFW), 484–504 (FFAF…PVFL), 525–545 (VLSH…AFAV), 569–589 (ASFW…PHVM), 590–610 (LGYT…GFFI), and 709–729 (LLIT…CLLL). The 211-residue stretch at 430–640 (IEIKTLTRRS…PYEAVLQNEF (211 aa)) folds into the ABC transmembrane type-2 domain.

This sequence belongs to the ABC transporter superfamily. ABCG family. Eye pigment precursor importer (TC 3.A.1.204) subfamily.

It localises to the membrane. In Arabidopsis thaliana (Mouse-ear cress), this protein is ABC transporter G family member 16 (ABCG16).